Here is a 405-residue protein sequence, read N- to C-terminus: GTPase Obg (405 aa).

Residues 1 to 159 (MRFIDEAVVT…KVLKFELKVV (159 aa)) form the Obg domain. The OBG-type G domain occupies 160-333 (ADVGLIGLPN…IKYHLMNEIE (174 aa)). GTP is bound by residues 166–173 (GLPNAGKS), 191–195 (FTTLV), 213–216 (DIPG), 283–286 (NKID), and 314–316 (ATL). Residues Ser-173 and Thr-193 each contribute to the Mg(2+) site. The span at 371 to 382 (YRAARKAAREGT) shows a compositional bias: basic and acidic residues. The interval 371–405 (YRAARKAAREGTDLSDDDFDDSDDDDDGVEVVYAP) is disordered. The segment covering 383 to 399 (DLSDDDFDDSDDDDDGV) has biased composition (acidic residues).

The protein belongs to the TRAFAC class OBG-HflX-like GTPase superfamily. OBG GTPase family. Monomer. It depends on Mg(2+) as a cofactor.

The protein resides in the cytoplasm. Its function is as follows. An essential GTPase which binds GTP, GDP and possibly (p)ppGpp with moderate affinity, with high nucleotide exchange rates and a fairly low GTP hydrolysis rate. Plays a role in control of the cell cycle, stress response, ribosome biogenesis and in those bacteria that undergo differentiation, in morphogenesis control. The sequence is that of GTPase Obg from Psychrobacter cryohalolentis (strain ATCC BAA-1226 / DSM 17306 / VKM B-2378 / K5).